We begin with the raw amino-acid sequence, 199 residues long: Streptomycin biosynthesis protein StrG (199 aa).

It functions in the pathway antibiotic biosynthesis; streptomycin biosynthesis. Functionally, may be involved in the formation of N-methyl-L-glucosamine. The protein is Streptomycin biosynthesis protein StrG (strG) of Streptomyces griseus.